A 145-amino-acid polypeptide reads, in one-letter code: Enhancer of mRNA-decapping protein 2 (145 aa).

2 disordered regions span residues 1 to 74 and 89 to 115; these read MGSE…DKAT and PKKKSCKYKKKKTRQYQDRAAASIDSK. Over residues 29-42 the composition is skewed to polar residues; sequence TKTQILVPPTQSLP. Over residues 55–73 the composition is skewed to basic and acidic residues; sequence QRREPRERTSKTGHEDDKA. The segment covering 89–102 has biased composition (basic residues); sequence PKKKSCKYKKKKTR.

This sequence belongs to the EDC family.

The protein resides in the cytoplasm. It is found in the nucleus. Functionally, mRNA-binding protein which stimulates mRNA decapping by DCP1 and DCP2. The chain is Enhancer of mRNA-decapping protein 2 (EDC2) from Saccharomyces cerevisiae (strain ATCC 204508 / S288c) (Baker's yeast).